We begin with the raw amino-acid sequence, 367 residues long: 2'-5'-oligoadenylate synthase 1A (367 aa).

The segment at 14–61 (DKFIEDYLLPDTTFGADVKSAVNVVCDFLKERCFQGAAHPVRVSKVVK) is interaction with dsRNA. Serine 64 contacts ATP. The Mg(2+) site is built by aspartate 76, aspartate 78, and aspartate 149. Residues 201 to 211 (QRPTKLKSLIR) are interaction with dsRNA. Positions 211, 214, and 231 each coordinate ATP. The S-geranylgeranyl cysteine moiety is linked to residue cysteine 364.

Belongs to the 2-5A synthase family. Monomer. Homotetramer. Interacts with OAS1D; the interaction inhibits OAS1A catalytic activity. Mg(2+) is required as a cofactor. C-terminal prenylated. In terms of tissue distribution, expressed in oocytes and granulosa cells of ovary, in intestine, stomach, spleen and uterus (at protein level). Expressed at high levels in the digestive tract and lymphoid organs. Expressed in ovary and spleen.

It localises to the cytoplasm. The protein localises to the mitochondrion. It is found in the nucleus. Its subcellular location is the microsome. The protein resides in the endoplasmic reticulum. It carries out the reaction 3 ATP = 5'-triphosphoadenylyl-(2'-&gt;5')-adenylyl-(2'-&gt;5')-adenosine + 2 diphosphate. With respect to regulation, produced as a latent enzyme which is activated by dsRNA generated during the course of viral infection. The dsRNA activator must be at least 15 nucleotides long, and no modification of the 2'-hydroxyl group is tolerated. ssRNA or dsDNA do not act as activators. Interferon-induced, dsRNA-activated antiviral enzyme which plays a critical role in cellular innate antiviral response. In addition, it may also play a role in other cellular processes such as apoptosis, cell growth, differentiation and gene regulation. Synthesizes higher oligomers of 2'-5'-oligoadenylates (2-5A) from ATP which then bind to the inactive monomeric form of ribonuclease L (RNase L) leading to its dimerization and subsequent activation. Activation of RNase L leads to degradation of cellular as well as viral RNA, resulting in the inhibition of protein synthesis, thus terminating viral replication. Can mediate the antiviral effect via the classical RNase L-dependent pathway or an alternative antiviral pathway independent of RNase L. This is 2'-5'-oligoadenylate synthase 1A (Oas1a) from Mus musculus (Mouse).